The sequence spans 264 residues: tRNA (guanine-N(1)-)-methyltransferase (264 aa).

S-adenosyl-L-methionine is bound by residues Gly-120 and 140-145 (IGDYVL).

Belongs to the RNA methyltransferase TrmD family. In terms of assembly, homodimer.

It localises to the cytoplasm. It carries out the reaction guanosine(37) in tRNA + S-adenosyl-L-methionine = N(1)-methylguanosine(37) in tRNA + S-adenosyl-L-homocysteine + H(+). Its function is as follows. Specifically methylates guanosine-37 in various tRNAs. The polypeptide is tRNA (guanine-N(1)-)-methyltransferase (Halorhodospira halophila (strain DSM 244 / SL1) (Ectothiorhodospira halophila (strain DSM 244 / SL1))).